We begin with the raw amino-acid sequence, 122 residues long: Small ribosomal subunit protein bS6 (122 aa).

Belongs to the bacterial ribosomal protein bS6 family.

Binds together with bS18 to 16S ribosomal RNA. The protein is Small ribosomal subunit protein bS6 of Vibrio cholerae serotype O1 (strain ATCC 39541 / Classical Ogawa 395 / O395).